A 456-amino-acid chain; its full sequence is Cysteine--tRNA ligase (456 aa).

Position 29 (Cys29) interacts with Zn(2+). Residues Val31–His41 carry the 'HIGH' region motif. Residues Cys210, His235, and Glu239 each coordinate Zn(2+). The 'KMSKS' region signature appears at Lys267 to Ser271. Lys270 lines the ATP pocket.

Belongs to the class-I aminoacyl-tRNA synthetase family. As to quaternary structure, monomer. Requires Zn(2+) as cofactor.

Its subcellular location is the cytoplasm. The enzyme catalyses tRNA(Cys) + L-cysteine + ATP = L-cysteinyl-tRNA(Cys) + AMP + diphosphate. The protein is Cysteine--tRNA ligase of Hydrogenovibrio crunogenus (strain DSM 25203 / XCL-2) (Thiomicrospira crunogena).